We begin with the raw amino-acid sequence, 257 residues long: (R)-2-haloacid dehalogenase (257 aa).

The protein belongs to the HAD-like hydrolase superfamily. S-2-haloalkanoic acid dehalogenase family.

The catalysed reaction is an (R)-2-haloacid + H2O = a (2S)-2-hydroxycarboxylate + a halide anion + H(+). Its function is as follows. Catalyzes the hydrolytic dehalogenation of small (R)-2-haloalkanoic acids to yield the corresponding (S)-2-hydroxyalkanoic acids. Acts on acids of short chain lengths, C(2) to C(4), with inversion of configuration at C-2. In Rhizobium sp. (strain NHG3), this protein is (R)-2-haloacid dehalogenase (dehI).